We begin with the raw amino-acid sequence, 128 residues long: Otoraplin (128 aa).

A signal peptide spans 1–18 (MARILILLLGGLVVLCAG). Cystine bridges form between C32/C37 and C55/C127. Positions 39 to 110 (YTISLARAQE…PSNLVKEQRV (72 aa)) constitute an SH3 domain.

This sequence belongs to the MIA/OTOR family. In terms of tissue distribution, highly expressed in cochlea.

It localises to the secreted. In Mus musculus (Mouse), this protein is Otoraplin (Otor).